The sequence spans 298 residues: Protease HtpX (298 aa).

2 helical membrane-spanning segments follow: residues 4–24 (IGLF…TMNL) and 38–58 (LGNL…VSLA). His-145 contributes to the Zn(2+) binding site. The active site involves Glu-146. His-149 lines the Zn(2+) pocket. Helical transmembrane passes span 160 to 180 (LLQG…AYVV) and 194 to 214 (ITFI…ASMI). Glu-223 is a binding site for Zn(2+).

It belongs to the peptidase M48B family. Zn(2+) is required as a cofactor.

It is found in the cell inner membrane. The polypeptide is Protease HtpX (Hydrogenovibrio crunogenus (strain DSM 25203 / XCL-2) (Thiomicrospira crunogena)).